A 651-amino-acid polypeptide reads, in one-letter code: Intraflagellar transport protein 70A (651 aa).

TPR repeat units follow at residues 8–41 (DGEY…QYRS), 42–75 (RAGL…TPEV), 140–173 (PESE…MGYK), 175–207 (DLSY…GIRE), 372–405 (LTEQ…YDET), 410–443 (IPVL…CNEH), and 445–478 (IWKL…HYDN). A coiled-coil region spans residues 494–521 (YIMTSQNEEAEELMRKIEKEEEQIAYEN). The TPR 8 repeat unit spans residues 530–563 (CIVNLVIGTLYCAKGNYEFGISRVIKSLEPYNKK).

This sequence belongs to the TTC30/dfy-1/fleer family.

It localises to the cell projection. The protein localises to the cilium. Functionally, required for polyglutamylation of axonemal tubulin. Plays a role in anterograde intraflagellar transport (IFT), the process by which cilia precursors are transported from the base of the cilium to the site of their incorporation at the tip. The protein is Intraflagellar transport protein 70A (ift70a) of Xenopus tropicalis (Western clawed frog).